A 196-amino-acid chain; its full sequence is Potassium-transporting ATPase KdpC subunit (196 aa).

Residues 7-27 (PALVLFFVLTLLTGVAYPLAV) form a helical membrane-spanning segment.

This sequence belongs to the KdpC family. The system is composed of three essential subunits: KdpA, KdpB and KdpC.

The protein resides in the cell inner membrane. Part of the high-affinity ATP-driven potassium transport (or Kdp) system, which catalyzes the hydrolysis of ATP coupled with the electrogenic transport of potassium into the cytoplasm. This subunit acts as a catalytic chaperone that increases the ATP-binding affinity of the ATP-hydrolyzing subunit KdpB by the formation of a transient KdpB/KdpC/ATP ternary complex. The polypeptide is Potassium-transporting ATPase KdpC subunit (Polaromonas naphthalenivorans (strain CJ2)).